The following is a 418-amino-acid chain: F-box/kelch-repeat protein SKIP20 (418 aa).

Residues 14–61 (DLIPGLPEELAIECLVRVPFQFHSSIKSVCRSWKCVISSRSFIKERIG) enclose the F-box domain. A disordered region spans residues 79-104 (PSPAMMEGGEMSQKKKEEEEGESQMT). 4 Kelch repeats span residues 104-150 (TQQL…AIQD), 153-206 (KVLL…SVGS), 208-255 (KVYV…SMAT), and 258-314 (GFCV…EFPG).

Part of a SCF (ASK-cullin-F-box) protein ligase complex. Interacts with SKP1A/ASK1 and SPK1B/ASK2.

The protein resides in the nucleus. Its pathway is protein modification; protein ubiquitination. Its function is as follows. Component of SCF(ASK-cullin-F-box) E3 ubiquitin ligase complexes, which may mediate the ubiquitination and subsequent proteasomal degradation of target proteins. This Arabidopsis thaliana (Mouse-ear cress) protein is F-box/kelch-repeat protein SKIP20 (SKIP20).